We begin with the raw amino-acid sequence, 513 residues long: Histidine ammonia-lyase (513 aa).

Residues 142-144 (ASG) constitute a cross-link (5-imidazolinone (Ala-Gly)). 2,3-didehydroalanine (Ser) is present on S143.

Belongs to the PAL/histidase family. In terms of processing, contains an active site 4-methylidene-imidazol-5-one (MIO), which is formed autocatalytically by cyclization and dehydration of residues Ala-Ser-Gly.

It localises to the cytoplasm. The catalysed reaction is L-histidine = trans-urocanate + NH4(+). It participates in amino-acid degradation; L-histidine degradation into L-glutamate; N-formimidoyl-L-glutamate from L-histidine: step 1/3. In Roseobacter denitrificans (strain ATCC 33942 / OCh 114) (Erythrobacter sp. (strain OCh 114)), this protein is Histidine ammonia-lyase.